A 90-amino-acid chain; its full sequence is UPF0223 protein lmo1058 (90 aa).

Belongs to the UPF0223 family.

This is UPF0223 protein lmo1058 from Listeria monocytogenes serovar 1/2a (strain ATCC BAA-679 / EGD-e).